Reading from the N-terminus, the 285-residue chain is tRNA-cytidine(32) 2-sulfurtransferase (285 aa).

The PP-loop motif motif lies at S48 to S53. Positions 122, 125, and 213 each coordinate [4Fe-4S] cluster.

Belongs to the TtcA family. As to quaternary structure, homodimer. Mg(2+) is required as a cofactor. The cofactor is [4Fe-4S] cluster.

The protein resides in the cytoplasm. The enzyme catalyses cytidine(32) in tRNA + S-sulfanyl-L-cysteinyl-[cysteine desulfurase] + AH2 + ATP = 2-thiocytidine(32) in tRNA + L-cysteinyl-[cysteine desulfurase] + A + AMP + diphosphate + H(+). Its pathway is tRNA modification. In terms of biological role, catalyzes the ATP-dependent 2-thiolation of cytidine in position 32 of tRNA, to form 2-thiocytidine (s(2)C32). The sulfur atoms are provided by the cysteine/cysteine desulfurase (IscS) system. This chain is tRNA-cytidine(32) 2-sulfurtransferase, found in Cytophaga hutchinsonii (strain ATCC 33406 / DSM 1761 / CIP 103989 / NBRC 15051 / NCIMB 9469 / D465).